The sequence spans 104 residues: Vegetative-specific protein H7 (104 aa).

The region spanning 43–97 (IQRARNALKMTQKELAFKINERPGVINEYESGSAIPSQAVLSKLEKALNVKLRGK) is the HTH cro/C1-type domain. Positions 54-73 (QKELAFKINERPGVINEYES) form a DNA-binding region, H-T-H motif.

The polypeptide is Vegetative-specific protein H7 (cinD-1) (Dictyostelium discoideum (Social amoeba)).